Here is a 554-residue protein sequence, read N- to C-terminus: MSPVLAGVLQLVALIAALALAYRPLGDYMAKVYSSDKHLRVEKWIYKGIGADPDTQMRWPAYLRGVLAFSAVSVLFLYVLQRVQGSLPGSLGFRSIDPDQAFNTAASFVTNTNWQSYYGEQAMGHVVQTGGLAVQNFVSASVGIAVAVALVRGFSRSRTGELGNFWSDLVRGTVRVLLPVSVIAAIVLVACGAIQNFSGIHSVGQFMGGSQQWNGGAVASQEAIKEAGTNGGGYFNANSAHPFENPGPFSNLFEIFLILLIPFALTRTFGRMVGSLRQGYAILATMVTIWIGFTALMMWTEFAHHGPAFQIAGGAMEGKETRFGVGGSSIFAVATTLTSTGAVDSFHSSFTGLGGGITLLSMQLGEIAPGGTGSGLYGILIMAVIAVFIAGLMVGRTPEYLGKKIGTREIKFAACYILITPALALVFTAAAMALPTPGHSMTNSGAHGFSEILYAYTSGANNNGSAFAGLNADTQWFNTTIGIVMLLGRFVPMVFVLALAGSLAEQKPIPATVGTLRTEKPLFTGLLVGAILIITGLTYFPALALGPLAEGLAS.

10 helical membrane passes run 1-21, 60-80, 131-151, 174-194, 246-266, 279-299, 375-395, 412-432, 481-501, and 525-545; these read MSPV…LALA, PAYL…LYVL, GLAV…VALV, VRVL…CGAI, PGPF…FALT, GYAI…LMMW, GLYG…LMVG, FAAC…AAAM, IGIV…ALAG, and GLLV…ALAL.

This sequence belongs to the KdpA family. As to quaternary structure, the system is composed of three essential subunits: KdpA, KdpB and KdpC.

It localises to the cell membrane. Its function is as follows. Part of the high-affinity ATP-driven potassium transport (or Kdp) system, which catalyzes the hydrolysis of ATP coupled with the electrogenic transport of potassium into the cytoplasm. This subunit binds the extracellular potassium ions and delivers the ions to the membrane domain of KdpB through an intramembrane tunnel. In Streptomyces avermitilis (strain ATCC 31267 / DSM 46492 / JCM 5070 / NBRC 14893 / NCIMB 12804 / NRRL 8165 / MA-4680), this protein is Potassium-transporting ATPase potassium-binding subunit.